Here is a 256-residue protein sequence, read N- to C-terminus: Small ribosomal subunit protein eS1 (256 aa).

N-acetylalanine; partial is present on A2.

It belongs to the eukaryotic ribosomal protein eS1 family. Component of the small ribosomal subunit. Mature ribosomes consist of a small (40S) and a large (60S) subunit. The 40S subunit contains about 33 different proteins and 1 molecule of RNA (18S). The 60S subunit contains about 49 different proteins and 3 molecules of RNA (25S, 5.8S and 5S).

It localises to the cytoplasm. In Candida tropicalis (strain ATCC MYA-3404 / T1) (Yeast), this protein is Small ribosomal subunit protein eS1.